The following is an 88-amino-acid chain: DNA-directed RNA polymerase subunit omega (88 aa).

It belongs to the RNA polymerase subunit omega family. In terms of assembly, the RNAP catalytic core consists of 2 alpha, 1 beta, 1 beta' and 1 omega subunit. When a sigma factor is associated with the core the holoenzyme is formed, which can initiate transcription.

It carries out the reaction RNA(n) + a ribonucleoside 5'-triphosphate = RNA(n+1) + diphosphate. Its function is as follows. Promotes RNA polymerase assembly. Latches the N- and C-terminal regions of the beta' subunit thereby facilitating its interaction with the beta and alpha subunits. The protein is DNA-directed RNA polymerase subunit omega of Haemophilus influenzae (strain 86-028NP).